Reading from the N-terminus, the 383-residue chain is Protein COS7 (383 aa).

Residues methionine 1–glutamate 42 lie on the Cytoplasmic side of the membrane. The helical transmembrane segment at isoleucine 43 to tryptophan 63 threads the bilayer. The Extracellular segment spans residues lysine 64–proline 72. A helical membrane pass occupies residues leucine 73–leucine 93. Residues serine 94–arginine 232 are Cytoplasmic-facing. The helical transmembrane segment at isoleucine 233–glutamine 253 threads the bilayer. Residue histidine 254 is a topological domain, extracellular. The helical transmembrane segment at phenylalanine 255–phenylalanine 275 threads the bilayer. The Cytoplasmic portion of the chain corresponds to glutamine 276–lysine 383.

Belongs to the DUP/COS family.

It is found in the membrane. The chain is Protein COS7 (COS7) from Saccharomyces cerevisiae (strain ATCC 204508 / S288c) (Baker's yeast).